A 380-amino-acid polypeptide reads, in one-letter code: UPF0754 membrane protein Bsph_0374 (380 aa).

The next 2 membrane-spanning stretches (helical) occupy residues 1-21 (MDNF…IGGV) and 357-377 (MITV…GLIV).

Belongs to the UPF0754 family.

The protein localises to the cell membrane. The sequence is that of UPF0754 membrane protein Bsph_0374 from Lysinibacillus sphaericus (strain C3-41).